The chain runs to 715 residues: Polyribonucleotide nucleotidyltransferase (715 aa).

Mg(2+) is bound by residues Asp-488 and Asp-494. The 60-residue stretch at 555 to 614 (PKIETIKIPVDKIREVIGSGGKVIREIVEKTGAKIDIGEDGTIKIAAAEQTKIDAAKEWI) folds into the KH domain. The S1 motif domain occupies 624-692 (GQIYTGKVVK…DRGKTRLSMK (69 aa)). The interval 692-715 (KVVDQETGEDLSKSNEKAEEPADA) is disordered. A compositionally biased stretch (basic and acidic residues) spans 701–715 (DLSKSNEKAEEPADA).

The protein belongs to the polyribonucleotide nucleotidyltransferase family. Mg(2+) serves as cofactor.

Its subcellular location is the cytoplasm. The catalysed reaction is RNA(n+1) + phosphate = RNA(n) + a ribonucleoside 5'-diphosphate. Involved in mRNA degradation. Catalyzes the phosphorolysis of single-stranded polyribonucleotides processively in the 3'- to 5'-direction. This chain is Polyribonucleotide nucleotidyltransferase, found in Phenylobacterium zucineum (strain HLK1).